The primary structure comprises 532 residues: Zinc finger protein 350 (532 aa).

One can recognise a KRAB domain in the interval Ile-8 to Ser-79. C2H2-type zinc fingers lie at residues His-206–His-228, His-234–His-256, Tyr-262–His-284, Tyr-290–His-312, Tyr-318–His-340, Phe-346–His-368, Phe-374–His-396, and Tyr-402–His-424. Positions Glu-427–Ser-443 are enriched in basic and acidic residues. The segment at Glu-427–Pro-465 is disordered. The span at Leu-445–Pro-465 shows a compositional bias: polar residues.

The protein belongs to the krueppel C2H2-type zinc-finger protein family. Interacts with BRCA1. Interacts with RNF11. Widely expressed.

The protein resides in the nucleus. It is found in the nucleus matrix. Functionally, transcriptional repressor. Binds to a specific sequence, 5'-GGGxxxCAGxxxTTT-3', within GADD45 intron 3. The protein is Zinc finger protein 350 (ZNF350) of Homo sapiens (Human).